Consider the following 529-residue polypeptide: CRISPR-associated endodeoxyribonuclease Cas12f1 (529 aa).

The tract at residues 1 to 95 (MAKNTITKTL…RGQFPDAVFW (95 aa)) is zinc finger domain (ZF). The Zn(2+) site is built by Cys50, His53, Cys69, and Cys72. Residues 96–192 (QEISEIFRQL…PTTKSDNFPI (97 aa)) form a recognition domain (REC) region. The wedge domain (WED) stretch occupies residues 193-312 (PLVKQKGGQY…MLNLSIDVPK (120 aa)). The interval 313–321 (IDKGVDPSI) is linker. The ruvC-I stretch occupies residues 322–473 (IGGIDVGVKS…RKVAPNNTSK (152 aa)). Active-site residues include Asp326 and Glu422. Residues 474–508 (TCSKCGHLNNYFNFEYRKKNKFPHFKCEKCNFKEN) are target nucleic acid-binding (TNB). Cys475 and Cys478 together coordinate Zn(2+). Arg490 is an active-site residue. Positions 500 and 503 each coordinate Zn(2+). The segment at 509–529 (ADYNAALNISNPKLKSTKEEP) is ruvC-II. Asp510 is a catalytic residue.

This sequence belongs to the CRISPR-associated endonuclease Cas12f family. An asymmetric homodimer. Guide RNA is probably required for dimerization. It depends on Mg(2+) as a cofactor. Zn(2+) serves as cofactor.

Target ssDNA cleavage is inhibited by EDTA. Activity is maximal with 5-50 mM NaCl, is less efficient at higher NaCl concentrations. CRISPR (clustered regularly interspaced short palindromic repeat), is an adaptive immune system that provides protection against mobile genetic elements (viruses, transposable elements and conjugative plasmids). CRISPR clusters contain sequences complementary to antecedent mobile elements and target invading nucleic acids. CRISPR clusters are transcribed and processed into CRISPR RNA (crRNA), which requires a trans-encoded small RNA (tracrRNA), but not this protein (in vitro). Upon expression in E.coli of this protein, a mini CRISPR array and the probable tracrRNA, the protein associates with both RNAs. The mini system is not active in E.coli against phiX174 phage, nor is it active in protection against transformation by foreign plasmids. In vitro the purified protein-tracrRNA-crRNA complex cleaves ssDNA complementary to the crRNA; target cleavage requires both tracrRNA and crRNA, but not a protospacer adjacent motif (PAM). The tracrRNA-crRNA can be replaced by a single guide RNA (sgRNA). 2-nucleotide mismatches in the middle of the crRNA:DNA heteroduplex decrease cleavage. Cleavage occurs just downstream of the heteroduplex. Activation of this protein results in non-specific ssDNA degradation in vitro. In vitro and in E.coli (coexpressed with sgRNA) has dsDNA endonuclease activity, recognizing the 5' PAM sequence TTTR; both sgRNA and a PAM are required for activity. Cleaves the target strand 24 and the nontarget strand 22 bases upstream of the PAM (respectively), resulting in 5' overhangs. The 2 monomers interact differently with the sgRNA and target DNA. Mutagenesis of a dimeric construct shows that one of the RuvC monomers probably cleaves both DNA strands. The chain is CRISPR-associated endodeoxyribonuclease Cas12f1 from Uncultured archaeon.